Consider the following 488-residue polypeptide: GTPase Der (488 aa).

EngA-type G domains follow at residues Pro-3 to Met-166 and Ile-199 to Thr-372. GTP is bound by residues Gly-9 to Ser-16, Asp-56 to Ile-60, Asn-118 to Asp-121, Gly-205 to Ser-212, Asp-252 to Val-256, and Asn-317 to Asp-320. A KH-like domain is found at Arg-373–Asp-457. The disordered stretch occupies residues Met-469–Lys-488. A compositionally biased stretch (basic residues) spans Arg-473 to Lys-488.

It belongs to the TRAFAC class TrmE-Era-EngA-EngB-Septin-like GTPase superfamily. EngA (Der) GTPase family. Associates with the 50S ribosomal subunit.

Functionally, GTPase that plays an essential role in the late steps of ribosome biogenesis. In Shewanella sp. (strain W3-18-1), this protein is GTPase Der.